The primary structure comprises 566 residues: Phenylalanine--tRNA ligase beta subunit (566 aa).

Residues 287–362 enclose the B5 domain; that stretch reads YFQEEVEFNV…IGEGLSSFNP (76 aa). The Mg(2+) site is built by D340, D346, E349, and D350.

Belongs to the phenylalanyl-tRNA synthetase beta subunit family. Type 2 subfamily. Tetramer of two alpha and two beta subunits. Mg(2+) is required as a cofactor.

The protein resides in the cytoplasm. It catalyses the reaction tRNA(Phe) + L-phenylalanine + ATP = L-phenylalanyl-tRNA(Phe) + AMP + diphosphate + H(+). This chain is Phenylalanine--tRNA ligase beta subunit, found in Borreliella burgdorferi (strain ATCC 35210 / DSM 4680 / CIP 102532 / B31) (Borrelia burgdorferi).